The following is a 330-amino-acid chain: Flotillin-like protein FloA (330 aa).

The next 2 helical transmembrane spans lie at 5 to 25 and 28 to 48; these read IILPIIIIAAVLIALAILFTF and VALWISALAAGVKISIFTLIG.

Belongs to the flotillin-like FloA family. Homooligomerizes.

Its subcellular location is the cell membrane. It is found in the membrane raft. Its function is as follows. Found in functional membrane microdomains (FMM) that may be equivalent to eukaryotic membrane rafts. FMMs are highly dynamic and increase in number as cells age. Flotillins are thought to be important factors in membrane fluidity. In Oceanobacillus iheyensis (strain DSM 14371 / CIP 107618 / JCM 11309 / KCTC 3954 / HTE831), this protein is Flotillin-like protein FloA.